Consider the following 435-residue polypeptide: Prenyltransferase nanD (435 aa).

E101 contacts substrate. 3 residues coordinate dimethylallyl diphosphate: R114, K202, and Y204. Y206 lines the substrate pocket. Dimethylallyl diphosphate contacts are provided by K280, Y282, Y364, Y429, and Y433.

Belongs to the tryptophan dimethylallyltransferase family.

The protein operates within secondary metabolite biosynthesis. Prenyltransferase; part of the gene cluster that mediates the biosynthesis of the benzazepine alkaloid nanangelenin A which contains an unprecedented 3,4-dihydro-1-benzazepine-2,5-dione-N-prenyl-N-acetoxy-anthranilamide scaffold. The first step of nanangelenin biosynthesis is catalyzed by the indoleamine 2,3-dioxygenase nanC which produces N-formyl-kynurenine through the catabolism of tryptophan. The two-module NRPS nanA then utilizes anthranilate (Ant) and L-kynurenine (L-Kyn) to assemble the dipeptide product nanangelenin B. The first adenylation domain of nanA (A1) loads anthranilate onto the T1 domain, while A2 loads kynurenine, generated through spontaneous nonenzymatic deformylation of the nanC-supplied N-formyl-kynurenine. The peptide bond formation between the tethered amino acids is catalyzed by the first condensation domain (C1) between anthranilate's carbonyl carbon and kynurenine's aliphatic primary amine. The second C domain (C2) catalyzes the final cyclization event between the aromatic amine of kynurenine and the tethered carbonyl carbon, yielding nanangelenin B. The terminal T3 domain enhances the catalytic efficiency of C2, suggesting the T2-tethered Ant-L-Kyn is transferred to T3 prior to cyclization by C2. Once released from nanA, nanangelenin B is then prenylated by the prenyltransferase nanD to form nanangelenin C. Nanangelenin C is then N-hydroxylated by the FAD-dependent monooxygenase nanF and further acetylated by the acetyltransferase nanB to yield nanangelenin F. Finally, the N-methyltransferase nanE methylates the amide nitrogen of 1-benzazepine to convert nanangelenin F into nanangelenin A. NanE is also able to methylate most of the intermediates of the pathway such as nanangelenin B and nanangelenin C to produce nanangelenin D and nanangelenin E, respectively. The polypeptide is Prenyltransferase nanD (Aspergillus nanangensis).